A 425-amino-acid polypeptide reads, in one-letter code: Histidine--tRNA ligase 1 (425 aa).

It belongs to the class-II aminoacyl-tRNA synthetase family. As to quaternary structure, homodimer.

The protein localises to the cytoplasm. The catalysed reaction is tRNA(His) + L-histidine + ATP = L-histidyl-tRNA(His) + AMP + diphosphate + H(+). The sequence is that of Histidine--tRNA ligase 1 from Bacillus thuringiensis subsp. konkukian (strain 97-27).